The sequence spans 294 residues: Cytidine deaminase (294 aa).

CMP/dCMP-type deaminase domains follow at residues 48–168 (DDDA…FGPK) and 187–294 (ALTD…RITF). 89–91 (NME) contributes to the substrate binding site. Zn(2+) is bound at residue His102. The Proton donor role is filled by Glu104. The Zn(2+) site is built by Cys129 and Cys132.

This sequence belongs to the cytidine and deoxycytidylate deaminase family. Homodimer. Zn(2+) is required as a cofactor.

The catalysed reaction is cytidine + H2O + H(+) = uridine + NH4(+). It carries out the reaction 2'-deoxycytidine + H2O + H(+) = 2'-deoxyuridine + NH4(+). In terms of biological role, this enzyme scavenges exogenous and endogenous cytidine and 2'-deoxycytidine for UMP synthesis. This chain is Cytidine deaminase, found in Serratia proteamaculans (strain 568).